The following is a 149-amino-acid chain: Transcriptional regulator MraZ (149 aa).

SpoVT-AbrB domains follow at residues 7-54 (KYVN…GISH) and 83-126 (AVQL…QPQN).

Belongs to the MraZ family. Forms oligomers.

The protein localises to the cytoplasm. Its subcellular location is the nucleoid. The polypeptide is Transcriptional regulator MraZ (Rickettsia peacockii (strain Rustic)).